The following is a 202-amino-acid chain: MVNYPHNPIRQKVTPLQKQQKHKQVDFANRGMSFEASINATNAYYLAKGIAVIHKKPTPIQIVKVDYPRRSRAKIVEAYFKQASTTDYSGIYKGHYIDFEAKETRQKTAMPMKNFHAHQIEHMAAVLKQKGICFVLLHFATLKETYYLPAKALIDFYQIDRGNKSMPLDYIRKNGFEVKLGAFPQVPYLDIIEQKFLGGDYN.

4 residues coordinate Mg(2+): T85, D87, E100, and Q119.

Belongs to the RecU family. The cofactor is Mg(2+).

The protein resides in the cytoplasm. It catalyses the reaction Endonucleolytic cleavage at a junction such as a reciprocal single-stranded crossover between two homologous DNA duplexes (Holliday junction).. Its function is as follows. Endonuclease that resolves Holliday junction intermediates in genetic recombination. Cleaves mobile four-strand junctions by introducing symmetrical nicks in paired strands. Promotes annealing of linear ssDNA with homologous dsDNA. Required for DNA repair, homologous recombination and chromosome segregation. This chain is Holliday junction resolvase RecU, found in Streptococcus equi subsp. equi (strain 4047).